We begin with the raw amino-acid sequence, 577 residues long: DEAD-box ATP-dependent RNA helicase 22 (577 aa).

The short motif at 82 to 110 (TSWESLGVSDRLASALHGAGLARPSLVQA) is the Q motif element. Positions 113–375 (IPHVLTTNDV…GGVLKRMFPN (263 aa)) constitute a Helicase ATP-binding domain. 126–133 (AETGSGKT) is a binding site for ATP. Positions 249-252 (DEAD) match the DEAD box motif. Residues 288-317 (SLGDTNEYREDSDSQSAELSADDEENEDGL) are disordered. The Helicase C-terminal domain maps to 407 to 568 (LLDAVKYGLK…SFRNKLKKQA (162 aa)).

It belongs to the DEAD box helicase family.

It carries out the reaction ATP + H2O = ADP + phosphate + H(+). The protein is DEAD-box ATP-dependent RNA helicase 22 of Oryza sativa subsp. japonica (Rice).